The following is a 1051-amino-acid chain: Exportin-T (1051 aa).

It belongs to the exportin family.

It is found in the nucleus. The protein localises to the cytoplasm. Its function is as follows. tRNA nucleus export receptor which facilitates tRNA translocation across the nuclear pore complex. Involved in pre-tRNA splicing, probably by affecting the interaction of pre-tRNA with splicing endonuclease. This Eremothecium gossypii (strain ATCC 10895 / CBS 109.51 / FGSC 9923 / NRRL Y-1056) (Yeast) protein is Exportin-T (LOS1).